Here is a 247-residue protein sequence, read N- to C-terminus: ATP synthase subunit a, chloroplastic (247 aa).

5 consecutive transmembrane segments (helical) span residues 38–58, 95–115, 134–154, 199–219, and 220–240; these read QVLI…IIAV, VPFI…GALL, INTT…AGLT, LVVV…VMFL, and GLFT…AYIG.

It belongs to the ATPase A chain family. F-type ATPases have 2 components, CF(1) - the catalytic core - and CF(0) - the membrane proton channel. CF(1) has five subunits: alpha(3), beta(3), gamma(1), delta(1), epsilon(1). CF(0) has four main subunits: a, b, b' and c.

The protein localises to the plastid. Its subcellular location is the chloroplast thylakoid membrane. Its function is as follows. Key component of the proton channel; it plays a direct role in the translocation of protons across the membrane. The protein is ATP synthase subunit a, chloroplastic of Carica papaya (Papaya).